A 349-amino-acid chain; its full sequence is Aspartate-semialdehyde dehydrogenase (349 aa).

Residues Thr12–Val15 and Asn39–Ser40 each bind NADP(+). Arg113 is a phosphate binding site. Cys148 serves as the catalytic Acyl-thioester intermediate. Gln175 is a binding site for substrate. NADP(+) is bound at residue Ser178–Gly179. Glu201 is a binding site for substrate. Residue Lys204 participates in phosphate binding. Substrate is bound at residue Arg234. The Proton acceptor role is filled by His241. Asn326–Thr327 contacts NADP(+).

It belongs to the aspartate-semialdehyde dehydrogenase family. As to quaternary structure, homodimer.

It carries out the reaction L-aspartate 4-semialdehyde + phosphate + NADP(+) = 4-phospho-L-aspartate + NADPH + H(+). Its pathway is amino-acid biosynthesis; L-lysine biosynthesis via DAP pathway; (S)-tetrahydrodipicolinate from L-aspartate: step 2/4. It functions in the pathway amino-acid biosynthesis; L-methionine biosynthesis via de novo pathway; L-homoserine from L-aspartate: step 2/3. The protein operates within amino-acid biosynthesis; L-threonine biosynthesis; L-threonine from L-aspartate: step 2/5. In terms of biological role, catalyzes the NADPH-dependent formation of L-aspartate-semialdehyde (L-ASA) by the reductive dephosphorylation of L-aspartyl-4-phosphate. This chain is Aspartate-semialdehyde dehydrogenase, found in Leptospira interrogans serogroup Icterohaemorrhagiae serovar Lai (strain 56601).